The following is a 215-amino-acid chain: Ras-related protein Rab-14 (215 aa).

Position 2 is an N-acetylalanine (alanine 2). 11 residues coordinate GTP: glycine 21, valine 22, glycine 23, lysine 24, serine 25, cysteine 26, alanine 38, aspartate 39, cysteine 40, histidine 42, and threonine 43. A Mg(2+)-binding site is contributed by serine 25. The Switch 1 motif lies at 42 to 47 (HTIGVE). Positions 43 and 66 each coordinate Mg(2+). Positions 68-77 (AGQERFRAVT) match the Switch 2 motif. Positions 69, 124, 125, 127, 155, and 156 each coordinate GTP. The disordered stretch occupies residues 188-215 (SGVQHKPSAPQGGRLTSEPQPQREGCGC). 2 S-geranylgeranyl cysteine lipidation sites follow: cysteine 213 and cysteine 215. Cysteine 215 is subject to Cysteine methyl ester.

It belongs to the small GTPase superfamily. Rab family. Interacts with ZFYVE20. Interacts with KIF16B. Interacts (GTP-bound form) with RUFY1; the interaction recruits RUFY1 onto endosomal membranes. Interacts (GTP-bound form) with RAB11FIP1 (via its C-terminus); the interactions doesn't mediate RAB11FIP1 rectruitment to membranes. Interacts with RAB11FIP2. It depends on Mg(2+) as a cofactor.

The protein resides in the recycling endosome. Its subcellular location is the early endosome membrane. It localises to the golgi apparatus membrane. It is found in the golgi apparatus. The protein localises to the trans-Golgi network membrane. The protein resides in the cytoplasmic vesicle. Its subcellular location is the phagosome. It catalyses the reaction GTP + H2O = GDP + phosphate + H(+). With respect to regulation, regulated by guanine nucleotide exchange factors (GEFs) including DENND6A and DENND6B which promote the exchange of bound GDP for free GTP. Regulated by GTPase activating proteins (GAPs) which increase the GTP hydrolysis activity. Inhibited by GDP dissociation inhibitors (GDIs) which prevent Rab-GDP dissociation. In terms of biological role, the small GTPases Rab are key regulators of intracellular membrane trafficking, from the formation of transport vesicles to their fusion with membranes. Rabs cycle between an inactive GDP-bound form and an active GTP-bound form that is able to recruit to membranes different set of downstream effectors directly responsible for vesicle formation, movement, tethering and fusion. Involved in membrane trafficking between the Golgi complex and endosomes during early embryonic development. Regulates the Golgi to endosome transport of FGFR-containing vesicles during early development, a key process for developing basement membrane and epiblast and primitive endoderm lineages during early postimplantation development. May act by modulating the kinesin KIF16B-cargo association to endosomes. Regulates, together with its guanine nucleotide exchange factor DENND6A, the specific endocytic transport of ADAM10, N-cadherin/CDH2 shedding and cell-cell adhesion. Mediates endosomal tethering and fusion through the interaction with RUFY1 and RAB4B. Interaction with RAB11FIP1 may function in the process of neurite formation. In Sus scrofa (Pig), this protein is Ras-related protein Rab-14 (RAB14).